The following is a 135-amino-acid chain: uncharacterized protein (135 aa).

One can recognise a Response regulatory domain in the interval 13 to 129 (QVLIAENSRF…KILEKVNAAI (117 aa)). Aspartate 64 is subject to 4-aspartylphosphate.

This is an uncharacterized protein from Leptospira interrogans serogroup Icterohaemorrhagiae serovar copenhageni (strain Fiocruz L1-130).